The chain runs to 541 residues: uncharacterized protein (541 aa).

Residues 1–55 (MTKTVTRAGGASGPQQFQSGGETMKYEITRRRFLAASSAVLAAPAIVTMVRPARA) constitute a signal peptide (tat-type signal). Positions 339 to 362 (RRSPSGISSPRSNRQPKAEALSAR) are disordered. Residues 341-351 (SPSGISSPRSN) are compositionally biased toward low complexity. 4 consecutive transmembrane segments (helical) span residues 379–399 (AIVW…MVFM), 420–440 (LPVL…AHSG), 466–486 (LVSA…GEIA), and 500–520 (VGYF…LAVA).

It belongs to the bacterial solute-binding protein 7 family. Post-translationally, predicted to be exported by the Tat system. The position of the signal peptide cleavage has not been experimentally proven.

Its subcellular location is the cell membrane. This is an uncharacterized protein from Sinorhizobium fredii (strain NBRC 101917 / NGR234).